A 142-amino-acid chain; its full sequence is Cytochrome c-type biogenesis protein CcmE (142 aa).

The Cytoplasmic segment spans residues 1–2 (MK). A helical; Signal-anchor for type II membrane protein transmembrane segment spans residues 3–23 (GKYLLGILVILGALGYMVFGG). Residues 24 to 142 (LGRNLVYFLT…EVRKLIEEAQ (119 aa)) are Periplasmic-facing. Positions 118 and 122 each coordinate heme.

It belongs to the CcmE/CycJ family.

The protein localises to the cell inner membrane. In terms of biological role, heme chaperone required for the biogenesis of c-type cytochromes. Transiently binds heme delivered by CcmC and transfers the heme to apo-cytochromes in a process facilitated by CcmF and CcmH. In Thermus thermophilus (strain ATCC BAA-163 / DSM 7039 / HB27), this protein is Cytochrome c-type biogenesis protein CcmE.